Consider the following 139-residue polypeptide: D-ribose pyranase (139 aa).

Catalysis depends on histidine 20, which acts as the Proton donor. Substrate-binding positions include aspartate 28, histidine 106, and 128-130 (YAN).

This sequence belongs to the RbsD / FucU family. RbsD subfamily. As to quaternary structure, homodecamer.

The protein localises to the cytoplasm. It catalyses the reaction beta-D-ribopyranose = beta-D-ribofuranose. Its pathway is carbohydrate metabolism; D-ribose degradation; D-ribose 5-phosphate from beta-D-ribopyranose: step 1/2. Functionally, catalyzes the interconversion of beta-pyran and beta-furan forms of D-ribose. This chain is D-ribose pyranase, found in Shewanella halifaxensis (strain HAW-EB4).